A 739-amino-acid polypeptide reads, in one-letter code: Polyribonucleotide nucleotidyltransferase (739 aa).

The Mg(2+) site is built by Asp489 and Asp495. Residues 556 to 615 (PKIDTIKIDVDKIKIVIGKGGETIDKIIAETGVKIDIDEDGLVAIFSPDRAAIERTKEII) enclose the KH domain. Residues 625 to 693 (DEVFQAKVVR…DKGRIDASMK (69 aa)) form the S1 motif domain. A disordered region spans residues 699–739 (PEGYVEPEKRERSEKPRRHKEHKEKKDNNFGEFKFHKVDKK). The span at 722 to 739 (EKKDNNFGEFKFHKVDKK) shows a compositional bias: basic and acidic residues.

This sequence belongs to the polyribonucleotide nucleotidyltransferase family. It depends on Mg(2+) as a cofactor.

Its subcellular location is the cytoplasm. The enzyme catalyses RNA(n+1) + phosphate = RNA(n) + a ribonucleoside 5'-diphosphate. Its function is as follows. Involved in mRNA degradation. Catalyzes the phosphorolysis of single-stranded polyribonucleotides processively in the 3'- to 5'-direction. The chain is Polyribonucleotide nucleotidyltransferase from Streptococcus suis (strain 98HAH33).